Consider the following 618-residue polypeptide: UvrABC system protein C (618 aa).

Positions Thr20 to Val98 constitute a GIY-YIG domain. The UVR domain maps to Asp207 to Met242.

The protein belongs to the UvrC family. In terms of assembly, interacts with UvrB in an incision complex.

The protein resides in the cytoplasm. The UvrABC repair system catalyzes the recognition and processing of DNA lesions. UvrC both incises the 5' and 3' sides of the lesion. The N-terminal half is responsible for the 3' incision and the C-terminal half is responsible for the 5' incision. This is UvrABC system protein C from Xanthomonas campestris pv. campestris (strain 8004).